A 516-amino-acid polypeptide reads, in one-letter code: uncharacterized protein (516 aa).

The interval 1–35 is disordered; it reads MAERTSESSSESASFDLEKQQSNHHDRYQSSVSSE. The segment covering 16 to 28 has biased composition (basic and acidic residues); that stretch reads DLEKQQSNHHDRY. S31 is modified (phosphoserine). A run of 12 helical transmembrane segments spans residues 77-97, 111-131, 143-163, 166-186, 198-218, 231-251, 301-321, 345-365, 386-406, 412-432, 439-461, and 481-501; these read VAVM…FSGA, VALL…VVWA, MIIA…AKDI, VMIC…TVAG, GLVI…SPIV, WTSY…IIFH, LLIF…VYGI, SLPY…VALF, LPSM…LAWT, IHWI…ITIF, IIDC…RSSF, and AGSL…MLFL.

It belongs to the major facilitator superfamily.

The protein localises to the membrane. This is an uncharacterized protein from Schizosaccharomyces pombe (strain 972 / ATCC 24843) (Fission yeast).